Here is a 550-residue protein sequence, read N- to C-terminus: Complement control protein (550 aa).

The N-terminal stretch at 1 to 19 (MAFLRQTLWILWTFTMVIG) is a signal peptide. Sushi domains are found at residues 23-83 (EKCS…TCNK), 84-150 (KSCP…FCEK), 151-209 (EKCH…TCEL), and 210-268 (AGCK…KCVL). Intrachain disulfides connect cysteine 25–cysteine 68, cysteine 53–cysteine 81, cysteine 86–cysteine 131, cysteine 116–cysteine 148, cysteine 153–cysteine 194, cysteine 180–cysteine 207, cysteine 212–cysteine 254, and cysteine 240–cysteine 266. Asparagine 63 and asparagine 111 each carry an N-linked (GlcNAc...) asparagine; by host glycan. A glycan (N-linked (GlcNAc...) asparagine; by host) is linked at asparagine 197. 3 N-linked (GlcNAc...) asparagine; by host glycosylation sites follow: asparagine 255, asparagine 275, and asparagine 299. The segment at 269-338 (EDIDDPNNSN…TSEGFNETTT (70 aa)) is disordered. Composition is skewed to polar residues over residues 288–302 (EKPN…NYTE) and 312–321 (TAATCDTNCE). 4 N-linked (GlcNAc...) asparagine; by host glycosylation sites follow: asparagine 334, asparagine 371, asparagine 374, and asparagine 378. 2 disordered regions span residues 387 to 408 (TPTS…NYNT) and 420 to 516 (IEEG…RPPA). Residues 424-440 (PSNSTTSEKATASTLSH) are compositionally biased toward polar residues. 4 N-linked (GlcNAc...) asparagine; by host glycosylation sites follow: asparagine 426, asparagine 445, asparagine 455, and asparagine 483. Residues 450–476 (IYTTLNKTTQLPSTNKPTNSQAKSSTK) show a composition bias toward polar residues. Positions 484–495 (KTTSNPAISLTD) are enriched in polar residues. A helical membrane pass occupies residues 528 to 548 (IGLLTAVALTCGLITLFHYLF).

It localises to the host membrane. It is found in the virion membrane. Functionally, inhibits the complement component of the host innate immune response. Regulates host C3 convertases, accelerating their decay, and acts as a cofactor for factor I degradation of C4b and C3b. Also binds heparin, and therefore may play two distinct roles when incorporated in virion membranes: immune evasion and host cell binding. The polypeptide is Complement control protein (ORF4) (Human herpesvirus 8 type P (isolate GK18) (HHV-8)).